Consider the following 595-residue polypeptide: Sulfite reductase [NADPH] flavoprotein alpha-component (595 aa).

In terms of domain architecture, Flavodoxin-like spans 59 to 197; sequence ITVLSASQTG…KADIWRREIV (139 aa). Residues 65–70, 112–115, and 148–157 each bind FMN; these read SQTGNA, STQG, and LGDSSYTYFA. One can recognise an FAD-binding FR-type domain in the interval 230 to 444; sequence EEPFTAHLVV…IEHNDNFRLP (215 aa). Residues Thr-318, Phe-352, 382-385, 400-402, Tyr-406, and 415-418 each bind FAD; these read RLYS, TVS, and GGAS. NADP(+) is bound by residues 515–516, 521–525, and Asp-557; these read SQ and KIYVQ. Tyr-595 contacts FAD.

This sequence belongs to the NADPH-dependent sulphite reductase flavoprotein subunit CysJ family. It in the N-terminal section; belongs to the flavodoxin family. In the C-terminal section; belongs to the flavoprotein pyridine nucleotide cytochrome reductase family. As to quaternary structure, alpha(8)-beta(8). The alpha component is a flavoprotein, the beta component is a hemoprotein. FAD is required as a cofactor. FMN serves as cofactor.

The enzyme catalyses hydrogen sulfide + 3 NADP(+) + 3 H2O = sulfite + 3 NADPH + 4 H(+). The protein operates within sulfur metabolism; hydrogen sulfide biosynthesis; hydrogen sulfide from sulfite (NADPH route): step 1/1. In terms of biological role, component of the sulfite reductase complex that catalyzes the 6-electron reduction of sulfite to sulfide. This is one of several activities required for the biosynthesis of L-cysteine from sulfate. The flavoprotein component catalyzes the electron flow from NADPH -&gt; FAD -&gt; FMN to the hemoprotein component. The protein is Sulfite reductase [NADPH] flavoprotein alpha-component of Baumannia cicadellinicola subsp. Homalodisca coagulata.